The chain runs to 79 residues: Small ribosomal subunit protein bS21 (79 aa).

2 stretches are compositionally biased toward basic residues: residues R47–K59 and G69–T79. Residues R47–T79 form a disordered region.

The protein belongs to the bacterial ribosomal protein bS21 family.

This Legionella pneumophila (strain Paris) protein is Small ribosomal subunit protein bS21.